A 592-amino-acid polypeptide reads, in one-letter code: MEKARPQWGHPLQFVFACISYAVGLGNVWRFPYLCQMYGGGSFLVPYIIMLIVEGMPLLYLELAVGQRMRQGSIGAWRTISPYLSGVGVASVVVSFFLSMYYNVINAWGFWYLFHSFQDPLPWSVCPLNSNHTGYDEECEKASSTQYFWYRKTLNISPSIQENGGVQWEPALCLTLAWLMVYLCILRGTESTGKVVYFTASMPYCVLIIYLVRGLTLHGATNGLMYMFTPKMEQLANPKAWINAATQIFFSLGLGFGSLIAFASYNEPSNNCQKHAIIVSIINSSTSIFASIVTFSIYGFKATFNYENCLNKVILLLTNSFDLEDGFLTVSNLEEVKNYLASTYPNKYSEVFPHIRNCSLESELDTAVQGTGLAFIVYTEAIKNMEVSQLWSVLYFFMLLMLGIGSMLGNTAAILTPLTDSKVISSYLPKEAISGLVCLINCAVGMVFTMEAGNYWFDIFNDYAATLSLLLIVLVETIAVCYVYGLKRFESDLRAMTGRTLSWYWKVMWAFVSPLLIVGLFIFYLSDYILTGTLQYQAWDATQGQLVTKDYPPHALAVIGLLVASSTMCIPLVALGTFIRNRLKRGGSAPVA.

Topologically, residues 1-7 (MEKARPQ) are cytoplasmic. The helical transmembrane segment at 8-28 (WGHPLQFVFACISYAVGLGNV) threads the bilayer. The Extracellular segment spans residues 29–42 (WRFPYLCQMYGGGS). Residues 43 to 63 (FLVPYIIMLIVEGMPLLYLEL) traverse the membrane as a helical segment. Residues 64–79 (AVGQRMRQGSIGAWRT) are Cytoplasmic-facing. Residues 80-100 (ISPYLSGVGVASVVVSFFLSM) form a helical membrane-spanning segment. At 101–165 (YYNVINAWGF…ISPSIQENGG (65 aa)) the chain is on the extracellular side. N131 carries an N-linked (GlcNAc...) asparagine glycan. A helical transmembrane segment spans residues 166–186 (VQWEPALCLTLAWLMVYLCIL). Topologically, residues 187–194 (RGTESTGK) are cytoplasmic. Residues 195–215 (VVYFTASMPYCVLIIYLVRGL) form a helical membrane-spanning segment. The Extracellular segment spans residues 216–241 (TLHGATNGLMYMFTPKMEQLANPKAW). Residues 242–262 (INAATQIFFSLGLGFGSLIAF) traverse the membrane as a helical segment. At 263–276 (ASYNEPSNNCQKHA) the chain is on the cytoplasmic side. Residues 277–297 (IIVSIINSSTSIFASIVTFSI) form a helical membrane-spanning segment. The Extracellular segment spans residues 298–389 (YGFKATFNYE…EAIKNMEVSQ (92 aa)). Residues 390 to 410 (LWSVLYFFMLLMLGIGSMLGN) form a helical membrane-spanning segment. Topologically, residues 411–431 (TAAILTPLTDSKVISSYLPKE) are cytoplasmic. A helical membrane pass occupies residues 432–452 (AISGLVCLINCAVGMVFTMEA). At 453 to 465 (GNYWFDIFNDYAA) the chain is on the extracellular side. The helical transmembrane segment at 466–486 (TLSLLLIVLVETIAVCYVYGL) threads the bilayer. The Cytoplasmic segment spans residues 487–504 (KRFESDLRAMTGRTLSWY). A helical membrane pass occupies residues 505–525 (WKVMWAFVSPLLIVGLFIFYL). The Extracellular portion of the chain corresponds to 526–554 (SDYILTGTLQYQAWDATQGQLVTKDYPPH). Residues 555 to 575 (ALAVIGLLVASSTMCIPLVAL) traverse the membrane as a helical segment. Over 576-592 (GTFIRNRLKRGGSAPVA) the chain is Cytoplasmic.

Belongs to the sodium:neurotransmitter symporter (SNF) (TC 2.A.22) family. SLC6A20 subfamily. As to expression, expressed in brain, kidney, small intestine, thymus, spleen and lung. In the brain, expressed in cerebellum, cortex and brain stem. Not detected in liver, muscle or heart. In brain, widespread in various regions, including the meninges, choroid plexus, cortex, hippocampus and thalamus.

It localises to the apical cell membrane. It carries out the reaction L-proline(out) + chloride(out) + 2 Na(+)(out) = L-proline(in) + chloride(in) + 2 Na(+)(in). It catalyses the reaction 4-hydroxy-L-proline(out) + chloride(out) + 2 Na(+)(out) = 4-hydroxy-L-proline(in) + chloride(in) + 2 Na(+)(in). The enzyme catalyses 2-methyl-2-(methylamino)propanoate(out) + chloride(out) + 2 Na(+)(out) = 2-methyl-2-(methylamino)propanoate(in) + chloride(in) + 2 Na(+)(in). The catalysed reaction is L-pipecolate(out) + chloride(out) + 2 Na(+)(out) = L-pipecolate(in) + chloride(in) + 2 Na(+)(in). It carries out the reaction glycine betaine(out) + chloride(out) + 2 Na(+)(out) = glycine betaine(in) + chloride(in) + 2 Na(+)(in). It catalyses the reaction glycine(out) + chloride(out) + 2 Na(+)(out) = glycine(in) + chloride(in) + 2 Na(+)(in). In terms of biological role, mediates the Na(+)- and Cl(-)-dependent uptake of imino acids such as L-proline, N-methyl-L-proline and pipecolate as well as N-methylated amino acids. Also transports glycine, regulates proline and glycine homeostasis in the brain playing a role in the modulation of NMDAR currents. This is Sodium- and chloride-dependent transporter XTRP3A from Mus musculus (Mouse).